The primary structure comprises 98 residues: HssA/B-like protein 39 (98 aa).

Residues 1–21 are disordered; the sequence is MTLFSSISSMSTSMSGSKSSI.

This sequence belongs to the hssA/B family.

This chain is HssA/B-like protein 39 (hssl39), found in Dictyostelium discoideum (Social amoeba).